Here is an 833-residue protein sequence, read N- to C-terminus: Putative GPI inositol-deacylase C (833 aa).

S130 is an active-site residue. N191 and N456 each carry an N-linked (GlcNAc...) asparagine glycan. 5 helical membrane passes run 521 to 541 (ILFI…QFHA), 560 to 580 (YLLT…LSQV), 617 to 637 (VLAP…TELV), 672 to 692 (TVFV…QLAF), and 723 to 743 (TICV…AVWI). N-linked (GlcNAc...) asparagine glycosylation occurs at N772. The chain crosses the membrane as a helical span at residues 787–807 (LLLAYTSLHCLFYGMMQAFMI).

It belongs to the GPI inositol-deacylase family.

The protein resides in the endoplasmic reticulum membrane. Functionally, involved in inositol deacylation of GPI-anchored proteins which plays important roles in the quality control and ER-associated degradation of GPI-anchored proteins. The protein is Putative GPI inositol-deacylase C (BST1C) of Yarrowia lipolytica (strain CLIB 122 / E 150) (Yeast).